The chain runs to 301 residues: Sulfate adenylyltransferase subunit 2 (301 aa).

Residues 282 to 301 (RLIDRDEAGSMEKKKREGYF) form a disordered region.

This sequence belongs to the PAPS reductase family. CysD subfamily. Heterodimer composed of CysD, the smaller subunit, and CysN.

It carries out the reaction sulfate + ATP + H(+) = adenosine 5'-phosphosulfate + diphosphate. It functions in the pathway sulfur metabolism; hydrogen sulfide biosynthesis; sulfite from sulfate: step 1/3. With CysN forms the ATP sulfurylase (ATPS) that catalyzes the adenylation of sulfate producing adenosine 5'-phosphosulfate (APS) and diphosphate, the first enzymatic step in sulfur assimilation pathway. APS synthesis involves the formation of a high-energy phosphoric-sulfuric acid anhydride bond driven by GTP hydrolysis by CysN coupled to ATP hydrolysis by CysD. This Chelativorans sp. (strain BNC1) protein is Sulfate adenylyltransferase subunit 2.